We begin with the raw amino-acid sequence, 578 residues long: Poly(A) RNA polymerase cid13 (578 aa).

Residues Asp110 and Asp112 each contribute to the Mg(2+) site. A PAP-associated domain is found at 275-330 (SLGILFVEFFRFFGYLFDYEHFVLSIRHGTFLSKRAKGWQFQLNNFLCVEEPFHTS). The segment at 495-565 (SHHFDERHGG…SEVVSPVSLH (71 aa)) is disordered. Positions 496–510 (HHFDERHGGDRHEKN) are enriched in basic and acidic residues. A compositionally biased stretch (basic residues) spans 516–527 (RYSRNKFHKKKQ). Positions 547 to 565 (NSPPSNSSSSEVVSPVSLH) are enriched in low complexity.

This sequence belongs to the DNA polymerase type-B-like family. Interacts with pab1. Requires Mg(2+) as cofactor. Mn(2+) is required as a cofactor.

Its subcellular location is the cytoplasm. It is found in the nucleus. The catalysed reaction is RNA(n) + ATP = RNA(n)-3'-adenine ribonucleotide + diphosphate. Its function is as follows. Polymerase that creates the 3' poly(A) tail of suc22 mRNA. This chain is Poly(A) RNA polymerase cid13 (cid13), found in Schizosaccharomyces pombe (strain 972 / ATCC 24843) (Fission yeast).